The following is a 203-amino-acid chain: Putative B3 domain-containing protein At1g50220 (203 aa).

The segment at residues 99–195 (DIVGNVALPK…KFIVLNFQHK (97 aa)) is a DNA-binding region (TF-B3).

The protein localises to the nucleus. The protein is Putative B3 domain-containing protein At1g50220 of Arabidopsis thaliana (Mouse-ear cress).